The chain runs to 878 residues: Alanine--tRNA ligase (878 aa).

The Zn(2+) site is built by H567, H571, C669, and H673.

This sequence belongs to the class-II aminoacyl-tRNA synthetase family. Zn(2+) is required as a cofactor.

It is found in the cytoplasm. The catalysed reaction is tRNA(Ala) + L-alanine + ATP = L-alanyl-tRNA(Ala) + AMP + diphosphate. Its function is as follows. Catalyzes the attachment of alanine to tRNA(Ala) in a two-step reaction: alanine is first activated by ATP to form Ala-AMP and then transferred to the acceptor end of tRNA(Ala). Also edits incorrectly charged Ser-tRNA(Ala) and Gly-tRNA(Ala) via its editing domain. This Rickettsia conorii (strain ATCC VR-613 / Malish 7) protein is Alanine--tRNA ligase.